A 213-amino-acid chain; its full sequence is Elongation factor 1-beta (213 aa).

Over residues 67–80 (AGKAPAASGSAAAA) the composition is skewed to low complexity. Residues 67–88 (AGKAPAASGSAAAAAEEEDDED) form a disordered region.

Belongs to the EF-1-beta/EF-1-delta family. In terms of assembly, EF-1 is composed of 4 subunits: alpha, beta, delta, and gamma.

Functionally, EF-1-beta and EF-1-delta stimulate the exchange of GDP bound to EF-1-alpha to GTP. The protein is Elongation factor 1-beta (EFB1) of Candida albicans (strain WO-1) (Yeast).